Here is a 185-residue protein sequence, read N- to C-terminus: Histone H1-delta (185 aa).

Disordered stretches follow at residues 1 to 37 (MADT…PKYS) and 90 to 185 (RHVK…GKKK). Positions 32–105 (SHPKYSDMIA…GASGSFLLAE (74 aa)) constitute an H15 domain. Residues 109–185 (TPKKAAAKKA…KAAKGKGKKK (77 aa)) show a composition bias toward basic residues.

It belongs to the histone H1/H5 family.

The protein resides in the nucleus. The protein localises to the chromosome. Histones H1 are necessary for the condensation of nucleosome chains into higher-order structures. This Strongylocentrotus purpuratus (Purple sea urchin) protein is Histone H1-delta.